Consider the following 361-residue polypeptide: Histidinol-phosphate aminotransferase (361 aa).

Lysine 219 is subject to N6-(pyridoxal phosphate)lysine.

This sequence belongs to the class-II pyridoxal-phosphate-dependent aminotransferase family. Histidinol-phosphate aminotransferase subfamily. As to quaternary structure, homodimer. The cofactor is pyridoxal 5'-phosphate.

The enzyme catalyses L-histidinol phosphate + 2-oxoglutarate = 3-(imidazol-4-yl)-2-oxopropyl phosphate + L-glutamate. It functions in the pathway amino-acid biosynthesis; L-histidine biosynthesis; L-histidine from 5-phospho-alpha-D-ribose 1-diphosphate: step 7/9. The sequence is that of Histidinol-phosphate aminotransferase from Acinetobacter baumannii (strain AB307-0294).